Here is a 133-residue protein sequence, read N- to C-terminus: MALTVKVITPDRVVWKKTVEEIILPSSTGQLGILMNHAPLLTALDIGVMRARMVNTWVPLVLLGGFAQIDNNLVTIIVSDAEEVKAIDEEEANKLLAASLANMEKAQSNREKIESMQNLRRARARMQAILSLK.

Belongs to the ATPase epsilon chain family. In terms of assembly, F-type ATPases have 2 components, CF(1) - the catalytic core - and CF(0) - the membrane proton channel. CF(1) has five subunits: alpha(3), beta(3), gamma(1), delta(1), epsilon(1). CF(0) has three main subunits: a, b and c.

It is found in the plastid. The protein resides in the chloroplast thylakoid membrane. Produces ATP from ADP in the presence of a proton gradient across the membrane. This Cyanidium caldarium (Red alga) protein is ATP synthase epsilon chain, chloroplastic.